The chain runs to 180 residues: Pro-glucagon (180 aa).

The signal sequence occupies residues 1–20; it reads MKSLYFVAGLFVMLVQGSWQ. Polar residues predominate over residues 25-35; the sequence is NTEEKSSSFPA. The disordered stretch occupies residues 25–59; sequence NTEEKSSSFPAPQTDPLGDPDQINEDKRHSQGTFT. Position 54 is a phosphoserine (Ser-54). The propeptide occupies 84-89; it reads NKNNIA. A phosphoserine mark is found at Ser-105 and Ser-108. Residue Arg-127 is modified to Arginine amide. The propeptide occupies 131–145; that stretch reads DFPEEVNIVEELRRR. 2 positions are modified to phosphoserine: Ser-150 and Ser-152.

It belongs to the glucagon family. In terms of processing, proglucagon is post-translationally processed in a tissue-specific manner in pancreatic A cells and intestinal L cells. In pancreatic A cells, the major bioactive hormone is glucagon cleaved by PCSK2/PC2. In the intestinal L cells PCSK1/PC1 liberates GLP-1, GLP-2, glicentin and oxyntomodulin. GLP-1 is further N-terminally truncated by post-translational processing in the intestinal L cells resulting in GLP-1(7-37) GLP-1-(7-36)amide. The C-terminal amidation is neither important for the metabolism of GLP-1 nor for its effects on the endocrine pancreas. Glucagon is secreted in the A cells of the islets of Langerhans. GLP-1, GLP-2, oxyntomodulin and glicentin are secreted from enteroendocrine cells throughout the gastrointestinal tract.

The protein localises to the secreted. Functionally, plays a key role in glucose metabolism and homeostasis. Regulates blood glucose by increasing gluconeogenesis and decreasing glycolysis. A counterregulatory hormone of insulin, raises plasma glucose levels in response to insulin-induced hypoglycemia. Plays an important role in initiating and maintaining hyperglycemic conditions in diabetes. Potent stimulator of glucose-dependent insulin release. Also stimulates insulin release in response to IL6. Plays important roles on gastric motility and the suppression of plasma glucagon levels. May be involved in the suppression of satiety and stimulation of glucose disposal in peripheral tissues, independent of the actions of insulin. Has growth-promoting activities on intestinal epithelium. May also regulate the hypothalamic pituitary axis (HPA) via effects on LH, TSH, CRH, oxytocin, and vasopressin secretion. Increases islet mass through stimulation of islet neogenesis and pancreatic beta cell proliferation. Inhibits beta cell apoptosis. In terms of biological role, stimulates intestinal growth and up-regulates villus height in the small intestine, concomitant with increased crypt cell proliferation and decreased enterocyte apoptosis. The gastrointestinal tract, from the stomach to the colon is the principal target for GLP-2 action. Plays a key role in nutrient homeostasis, enhancing nutrient assimilation through enhanced gastrointestinal function, as well as increasing nutrient disposal. Stimulates intestinal glucose transport and decreases mucosal permeability. Its function is as follows. Significantly reduces food intake. Inhibits gastric emptying in humans. Suppression of gastric emptying may lead to increased gastric distension, which may contribute to satiety by causing a sensation of fullness. Functionally, may modulate gastric acid secretion and the gastro-pyloro-duodenal activity. May play an important role in intestinal mucosal growth in the early period of life. The protein is Pro-glucagon (GCG) of Bos taurus (Bovine).